A 130-amino-acid chain; its full sequence is U-scoloptoxin(17)-Er1a (130 aa).

The signal sequence occupies residues 1 to 18 (MKLLVFALFLQVVQLSLA).

Belongs to the scoloptoxin-17 family. Post-translationally, contains 4 disulfide bonds. Expressed by the venom gland.

The protein resides in the secreted. The sequence is that of U-scoloptoxin(17)-Er1a from Ethmostigmus rubripes (Giant centipede).